A 150-amino-acid polypeptide reads, in one-letter code: MARSHDTKGSGGLSQRQLRVGEQVRHTLAQVLQRGEIRDDLIERTVISVSEVRMSPDLKIATCFITPLGSADPQAVIKALASHAKFIRGRVAPSLAQMKYMPEFRFRPDTSFDNFSKIDALLRSPEVARDLSHDDDEDGGADEAPRNGDE.

The tract at residues 126–150 is disordered; that stretch reads EVARDLSHDDDEDGGADEAPRNGDE.

The protein belongs to the RbfA family. As to quaternary structure, monomer. Binds 30S ribosomal subunits, but not 50S ribosomal subunits or 70S ribosomes.

Its subcellular location is the cytoplasm. Its function is as follows. One of several proteins that assist in the late maturation steps of the functional core of the 30S ribosomal subunit. Associates with free 30S ribosomal subunits (but not with 30S subunits that are part of 70S ribosomes or polysomes). Required for efficient processing of 16S rRNA. May interact with the 5'-terminal helix region of 16S rRNA. In Brucella suis (strain ATCC 23445 / NCTC 10510), this protein is Ribosome-binding factor A.